The following is a 250-amino-acid chain: Type III pantothenate kinase (250 aa).

Residue 6–13 (DVGNTNTV) coordinates ATP. Substrate is bound at residue 103–106 (GADR). Aspartate 105 functions as the Proton acceptor in the catalytic mechanism. Residue aspartate 125 coordinates K(+). Threonine 128 contacts ATP. Threonine 180 is a binding site for substrate.

The protein belongs to the type III pantothenate kinase family. As to quaternary structure, homodimer. It depends on NH4(+) as a cofactor. Requires K(+) as cofactor.

It is found in the cytoplasm. The enzyme catalyses (R)-pantothenate + ATP = (R)-4'-phosphopantothenate + ADP + H(+). Its pathway is cofactor biosynthesis; coenzyme A biosynthesis; CoA from (R)-pantothenate: step 1/5. In terms of biological role, catalyzes the phosphorylation of pantothenate (Pan), the first step in CoA biosynthesis. The chain is Type III pantothenate kinase from Frankia alni (strain DSM 45986 / CECT 9034 / ACN14a).